Reading from the N-terminus, the 459-residue chain is Sensor histidine kinase SpaK (459 aa).

Over 1–18 the chain is Cytoplasmic; sequence MGIGFKGRKTLLRELVKY. Residues 19 to 39 traverse the membrane as a helical segment; that stretch reads MVTLCISLVVLALLYIFINTI. Topologically, residues 40–155 are extracellular; the sequence is AMNTGFSHPA…RKYLPNYELT (116 aa). Residues 156–176 traverse the membrane as a helical segment; it reads SICILIILLIIVISIITTYFA. The Cytoplasmic portion of the chain corresponds to 177–459; the sequence is NRLRKHFETL…VRVKIPLRNE (283 aa). In terms of domain architecture, Histidine kinase spans 244–458; the sequence is ALAHEIKIPI…EVRVKIPLRN (215 aa). Phosphohistidine; by autocatalysis is present on H247.

It is found in the cell membrane. It catalyses the reaction ATP + protein L-histidine = ADP + protein N-phospho-L-histidine.. Functionally, member of the two-component regulatory system SpaK/SpaR involved in the regulation of the biosynthesis of lantibiotic subtilin. SpaK may function as a membrane-associated protein kinase that phosphorylates SpaR in response to environmental signals. The sequence is that of Sensor histidine kinase SpaK (spaK) from Bacillus subtilis.